We begin with the raw amino-acid sequence, 115 residues long: Small ribosomal subunit protein uS14m (115 aa).

Belongs to the universal ribosomal protein uS14 family. As to quaternary structure, component of the mitochondrial small ribosomal subunit (mt-SSU). Mature yeast 74S mitochondrial ribosomes consist of a small (37S) and a large (54S) subunit. The 37S small subunit contains a 15S ribosomal RNA (15S mt-rRNA) and 34 different proteins. The 54S large subunit contains a 21S rRNA (21S mt-rRNA) and 46 different proteins.

The protein resides in the mitochondrion. Functionally, component of the mitochondrial ribosome (mitoribosome), a dedicated translation machinery responsible for the synthesis of mitochondrial genome-encoded proteins, including at least some of the essential transmembrane subunits of the mitochondrial respiratory chain. The mitoribosomes are attached to the mitochondrial inner membrane and translation products are cotranslationally integrated into the membrane. This chain is Small ribosomal subunit protein uS14m (MRP2), found in Saccharomyces cerevisiae (strain ATCC 204508 / S288c) (Baker's yeast).